Consider the following 453-residue polypeptide: UDP-N-acetylmuramate--L-alanine ligase (453 aa).

Gly-112–Thr-118 lines the ATP pocket.

It belongs to the MurCDEF family.

It is found in the cytoplasm. It catalyses the reaction UDP-N-acetyl-alpha-D-muramate + L-alanine + ATP = UDP-N-acetyl-alpha-D-muramoyl-L-alanine + ADP + phosphate + H(+). The protein operates within cell wall biogenesis; peptidoglycan biosynthesis. Functionally, cell wall formation. The sequence is that of UDP-N-acetylmuramate--L-alanine ligase from Bdellovibrio bacteriovorus (strain ATCC 15356 / DSM 50701 / NCIMB 9529 / HD100).